Reading from the N-terminus, the 391-residue chain is Terminal nucleotidyltransferase 5C (391 aa).

This sequence belongs to the TENT family. Interacts with BCCIP and PABPC1; the interaction has no effect on TENT5C poly(A) polymerase function. Interacts with PLK4; this interaction leads to the TENT5C recruitment into the centrosome.

Its subcellular location is the nucleus. It is found in the cytoplasm. It localises to the cytoskeleton. The protein localises to the microtubule organizing center. The protein resides in the centrosome. The catalysed reaction is RNA(n) + ATP = RNA(n)-3'-adenine ribonucleotide + diphosphate. Its function is as follows. Catalyzes the transfer of one adenosine molecule from an ATP to an mRNA poly(A) tail bearing a 3'-OH terminal group and enhances mRNA stability and gene expression. Can also elongate RNA oligos ending with uridine molecule, provided that the sequence is adenosine-rich. Mainly targets mRNAs encoding endoplasmic reticulum-targeted protein. This Macaca fascicularis (Crab-eating macaque) protein is Terminal nucleotidyltransferase 5C.